Reading from the N-terminus, the 133-residue chain is uncharacterized protein (133 aa).

This is an uncharacterized protein from Caenorhabditis elegans.